The following is a 653-amino-acid chain: Acetyl-coenzyme A synthetase 1 (653 aa).

Residues 191–194 (RGGR), threonine 311, and asparagine 335 contribute to the CoA site. ATP is bound by residues 387–389 (GEP), 411–416 (DTWWQT), aspartate 500, and arginine 515. Residue serine 523 participates in CoA binding. Arginine 526 lines the ATP pocket. Mg(2+)-binding residues include valine 537, histidine 539, and valine 542. Arginine 584 is a CoA binding site. Lysine 609 is modified (N6-acetyllysine).

Belongs to the ATP-dependent AMP-binding enzyme family. Requires Mg(2+) as cofactor. Acetylated. Deacetylation by the SIR2-homolog deacetylase activates the enzyme.

The catalysed reaction is acetate + ATP + CoA = acetyl-CoA + AMP + diphosphate. Functionally, catalyzes the conversion of acetate into acetyl-CoA (AcCoA), an essential intermediate at the junction of anabolic and catabolic pathways. AcsA undergoes a two-step reaction. In the first half reaction, AcsA combines acetate with ATP to form acetyl-adenylate (AcAMP) intermediate. In the second half reaction, it can then transfer the acetyl group from AcAMP to the sulfhydryl group of CoA, forming the product AcCoA. The sequence is that of Acetyl-coenzyme A synthetase 1 from Pseudomonas putida (strain ATCC 47054 / DSM 6125 / CFBP 8728 / NCIMB 11950 / KT2440).